A 297-amino-acid polypeptide reads, in one-letter code: Phosphoribosylaminoimidazole-succinocarboxamide synthase (297 aa).

The protein belongs to the SAICAR synthetase family.

It carries out the reaction 5-amino-1-(5-phospho-D-ribosyl)imidazole-4-carboxylate + L-aspartate + ATP = (2S)-2-[5-amino-1-(5-phospho-beta-D-ribosyl)imidazole-4-carboxamido]succinate + ADP + phosphate + 2 H(+). It participates in purine metabolism; IMP biosynthesis via de novo pathway; 5-amino-1-(5-phospho-D-ribosyl)imidazole-4-carboxamide from 5-amino-1-(5-phospho-D-ribosyl)imidazole-4-carboxylate: step 1/2. The protein is Phosphoribosylaminoimidazole-succinocarboxamide synthase of Mycobacterium sp. (strain JLS).